The following is a 183-amino-acid chain: Small ribosomal subunit protein uS4c (183 aa).

One can recognise an S4 RNA-binding domain in the interval 82 to 143 (MRLDNILFRL…KQRSKALIQN (62 aa)).

It belongs to the universal ribosomal protein uS4 family. Part of the 30S ribosomal subunit. Contacts protein S5. The interaction surface between S4 and S5 is involved in control of translational fidelity.

Its subcellular location is the plastid. The protein resides in the chloroplast. One of the primary rRNA binding proteins, it binds directly to 16S rRNA where it nucleates assembly of the body of the 30S subunit. Its function is as follows. With S5 and S12 plays an important role in translational accuracy. This Sparaxis sp. (strain Lejeune 1997) protein is Small ribosomal subunit protein uS4c (rps4).